The chain runs to 308 residues: Lipoyl synthase (308 aa).

[4Fe-4S] cluster contacts are provided by cysteine 48, cysteine 53, cysteine 59, cysteine 74, cysteine 78, cysteine 81, and serine 287. The Radical SAM core domain occupies 60–277; that stretch reads WSRHTATYLA…RSVGEALGLF (218 aa).

This sequence belongs to the radical SAM superfamily. Lipoyl synthase family. It depends on [4Fe-4S] cluster as a cofactor.

It localises to the cytoplasm. The enzyme catalyses [[Fe-S] cluster scaffold protein carrying a second [4Fe-4S](2+) cluster] + N(6)-octanoyl-L-lysyl-[protein] + 2 oxidized [2Fe-2S]-[ferredoxin] + 2 S-adenosyl-L-methionine + 4 H(+) = [[Fe-S] cluster scaffold protein] + N(6)-[(R)-dihydrolipoyl]-L-lysyl-[protein] + 4 Fe(3+) + 2 hydrogen sulfide + 2 5'-deoxyadenosine + 2 L-methionine + 2 reduced [2Fe-2S]-[ferredoxin]. Its pathway is protein modification; protein lipoylation via endogenous pathway; protein N(6)-(lipoyl)lysine from octanoyl-[acyl-carrier-protein]: step 2/2. Catalyzes the radical-mediated insertion of two sulfur atoms into the C-6 and C-8 positions of the octanoyl moiety bound to the lipoyl domains of lipoate-dependent enzymes, thereby converting the octanoylated domains into lipoylated derivatives. The polypeptide is Lipoyl synthase (Chlamydia muridarum (strain MoPn / Nigg)).